A 790-amino-acid polypeptide reads, in one-letter code: Sodium- and chloride-dependent glycine transporter 2 (790 aa).

The tract at residues 1 to 39 (MDYVNVVDGSKKTMNSPEGAAPGLIGATGITNPTPDNDL) is disordered. The Cytoplasmic segment spans residues 1–192 (MDYVNVVDGS…ARGNWSNKLD (192 aa)). The next 3 helical transmembrane spans lie at 193–213 (FILS…FPYL), 220–240 (GAFL…IFYL), and 264–284 (GCGI…NIIM). Residues glycine 199, alanine 201, valine 202, and asparagine 206 each contribute to the Na(+) site. The Extracellular portion of the chain corresponds to 285 to 387 (CYTIFYLFAS…GIEYPGEIRW (103 aa)). Cysteine 304 and cysteine 313 form a disulfide bridge. N-linked (GlcNAc...) asparagine glycans are attached at residues asparagine 336, asparagine 346, asparagine 351, and asparagine 357. The next 3 helical transmembrane spans lie at 388 to 408 (PLVF…AKGI), 427 to 447 (VILL…WWFI), and 463 to 483 (AATQ…TLSS). Na(+)-binding residues include serine 470 and asparagine 502. 6 helical membrane-spanning segments follow: residues 504 to 524 (ATSI…AHIL), 556 to 576 (WAII…FATI), 597 to 617 (LFTL…ITQG), 631 to 651 (SYSL…IYGL), 672 to 692 (ICWA…SFYQ), and 708 to 728 (MVMG…MFVI). Na(+)-binding residues include leucine 567 and aspartate 570. Over 729-790 (KMFLAPGTFI…PKDFELGTQC (62 aa)) the chain is Cytoplasmic.

It belongs to the sodium:neurotransmitter symporter (SNF) (TC 2.A.22) family. SLC6A5 subfamily. In terms of tissue distribution, first expressed in late neurula stages in the anterior spinal cord, where expression intensifies through the tailbud stages, and by hatching, expression is seen in the hindbrain. During late hatching stages, expression extends along most of the length of the spinal cord, mildly intensifies in the hindbrain, and appears in localized regions of the lateral forebrain and medial midbrain. By the swimming tadpole stage, weak expression appears in the anterior hindbrain, with stronger expression in the posterior, postmitotic neurons.

Its subcellular location is the cell membrane. It carries out the reaction glycine(out) + chloride(out) + 3 Na(+)(out) = glycine(in) + chloride(in) + 3 Na(+)(in). In terms of biological role, sodium- and chloride-dependent glycine transporter. Terminates the action of glycine by its high affinity sodium-dependent reuptake into presynaptic terminals. May be responsible for the termination of neurotransmission at strychnine-sensitive glycinergic synapses. The polypeptide is Sodium- and chloride-dependent glycine transporter 2 (Xenopus laevis (African clawed frog)).